The following is a 318-amino-acid chain: Oncosphere antigen A (318 aa).

3 Fibronectin type-III domains span residues 6 to 103 (IPQN…TPLP), 109 to 207 (KPSF…ISRA), and 211 to 308 (VPQN…TPSV).

The sequence is that of Oncosphere antigen A (ONCA) from Hydatigena taeniaeformis (Feline tapeworm).